Consider the following 379-residue polypeptide: Succinyl-diaminopimelate desuccinylase (379 aa).

Position 70 (H70) interacts with Zn(2+). D72 is a catalytic residue. Position 103 (D103) interacts with Zn(2+). E137 serves as the catalytic Proton acceptor. Residues E138, E166, and H352 each contribute to the Zn(2+) site.

It belongs to the peptidase M20A family. DapE subfamily. As to quaternary structure, homodimer. Zn(2+) serves as cofactor. Requires Co(2+) as cofactor.

The catalysed reaction is N-succinyl-(2S,6S)-2,6-diaminopimelate + H2O = (2S,6S)-2,6-diaminopimelate + succinate. It functions in the pathway amino-acid biosynthesis; L-lysine biosynthesis via DAP pathway; LL-2,6-diaminopimelate from (S)-tetrahydrodipicolinate (succinylase route): step 3/3. Catalyzes the hydrolysis of N-succinyl-L,L-diaminopimelic acid (SDAP), forming succinate and LL-2,6-diaminopimelate (DAP), an intermediate involved in the bacterial biosynthesis of lysine and meso-diaminopimelic acid, an essential component of bacterial cell walls. This Burkholderia ambifaria (strain MC40-6) protein is Succinyl-diaminopimelate desuccinylase.